The sequence spans 889 residues: Voltage-gated potassium channel KCNC3 (889 aa).

The important for normal N-type inactivation stretch occupies residues 1-80; the sequence is MLSSVCVWSF…CSGLPAVAMG (80 aa). Residues 1-291 are Cytoplasmic-facing; sequence MLSSVCVWSF…EDPYSSRAAR (291 aa). The tract at residues 10 to 66 is disordered; the sequence is FSGRQGTRKQHSQPAPTPQPPESSPPPLLPPPQQQCAQPGTAASPAGAPLSCGPGGR. The segment covering 24–42 has biased composition (pro residues); it reads APTPQPPESSPPPLLPPPQ. His159, Cys165, Cys186, and Cys187 together coordinate Zn(2+). Residues 202–231 form a disordered region; the sequence is DSFEAPDSSGNANANAGGAHDAGLDDEAGA. Positions 211–222 are enriched in low complexity; sequence GNANANAGGAHD. A helical transmembrane segment spans residues 292 to 310; the sequence is YVAFASLFFILISITTFCL. Asn321 carries an N-linked (GlcNAc...) asparagine glycan. A helical membrane pass occupies residues 352 to 371; sequence VEGVCVVWFTFEFLMRVTFC. Over 372–380 the chain is Cytoplasmic; the sequence is PDKVEFLKS. A helical transmembrane segment spans residues 381–399; sequence SLNIIDCVAILPFYLEVGL. The chain crosses the membrane as a helical; Voltage-sensor span at residues 413 to 435; that stretch reads FLRVVRFVRILRIFKLTRHFVGL. The Cytoplasmic portion of the chain corresponds to 436–448; it reads RVLGHTLRASTNE. Residues 449–470 form a helical membrane-spanning segment; that stretch reads FLLLIIFLALGVLIFATMIYYA. K(+) contacts are provided by Thr504, Leu505, Gly506, and Tyr507. The Selectivity filter motif lies at 504 to 509; sequence TLGYGD. Residues 519–540 traverse the membrane as a helical segment; the sequence is LVGALCALAGVLTIAMPVPVIV. Over 541-889 the chain is Cytoplasmic; it reads NNFGMYYSLA…FPSRHSSPAV (349 aa). Disordered stretches follow at residues 557 to 627, 691 to 834, and 852 to 889; these read PKKK…LLRG, IDQP…PQSL, and TLGF…SPAV. Arg626 is subject to Omega-N-methylarginine. Residues Ser697 and Ser702 each carry the phosphoserine modification. Residues 748-764 show a composition bias toward low complexity; sequence SQAPPASCPTSTPTQQP. A Phosphothreonine modification is found at Thr759. Residues 794-808 show a composition bias toward basic residues; it reads HRSHQPPGKHQRGGR.

It belongs to the potassium channel family. C (Shaw) (TC 1.A.1.2) subfamily. Kv3.3/KCNC3 sub-subfamily. As to quaternary structure, homotetramer. Heterotetramer with KCNC1. Interacts (via C-terminus) with HAX1; this interaction modulates channel gating. Identified in a complex with ACTR3, a subunit of the Arp2/3 complex; this interaction is indirect and depends on the presence of HAX1. Post-translationally, N-glycosylated. In terms of tissue distribution, detected on Purkinje cells in the cerebellum molecular layer (at protein level).

It localises to the cell membrane. It is found in the presynaptic cell membrane. Its subcellular location is the perikaryon. The protein localises to the cell projection. The protein resides in the axon. It localises to the dendrite. It is found in the dendritic spine membrane. Its subcellular location is the cytoplasm. The protein localises to the cell cortex. The protein resides in the cytoskeleton. It carries out the reaction K(+)(in) = K(+)(out). In terms of biological role, voltage-gated potassium channel that plays an important role in the rapid repolarization of fast-firing brain neurons. The channel opens in response to the voltage difference across the membrane, forming a potassium-selective channel through which potassium ions pass in accordance with their electrochemical gradient. The channel displays rapid activation and inactivation kinetics. It plays a role in the regulation of the frequency, shape and duration of action potentials in Purkinje cells. Required for normal survival of cerebellar neurons, probably via its role in regulating the duration and frequency of action potentials that in turn regulate the activity of voltage-gated Ca(2+) channels and cellular Ca(2+) homeostasis. Required for normal motor function. Plays a role in the reorganization of the cortical actin cytoskeleton and the formation of actin veil structures in neuronal growth cones via its interaction with HAX1 and the Arp2/3 complex. The chain is Voltage-gated potassium channel KCNC3 from Rattus norvegicus (Rat).